Consider the following 314-residue polypeptide: UDP-N-acetylenolpyruvoylglucosamine reductase (314 aa).

Positions 27 to 192 (KIGGKARYIV…LRAVFCLKFA (166 aa)) constitute an FAD-binding PCMH-type domain. R171 is an active-site residue. S223 functions as the Proton donor in the catalytic mechanism. The active site involves E293.

The protein belongs to the MurB family. It depends on FAD as a cofactor.

The protein localises to the cytoplasm. The enzyme catalyses UDP-N-acetyl-alpha-D-muramate + NADP(+) = UDP-N-acetyl-3-O-(1-carboxyvinyl)-alpha-D-glucosamine + NADPH + H(+). It participates in cell wall biogenesis; peptidoglycan biosynthesis. Functionally, cell wall formation. This Caldicellulosiruptor bescii (strain ATCC BAA-1888 / DSM 6725 / KCTC 15123 / Z-1320) (Anaerocellum thermophilum) protein is UDP-N-acetylenolpyruvoylglucosamine reductase.